Consider the following 155-residue polypeptide: Large ribosomal subunit protein uL13 (155 aa).

It belongs to the universal ribosomal protein uL13 family. Part of the 50S ribosomal subunit.

In terms of biological role, this protein is one of the early assembly proteins of the 50S ribosomal subunit, although it is not seen to bind rRNA by itself. It is important during the early stages of 50S assembly. In Rickettsia rickettsii (strain Iowa), this protein is Large ribosomal subunit protein uL13.